The following is a 136-amino-acid chain: Ubiquinol-cytochrome c reductase complex assembly factor 4 (136 aa).

Positions 1 to 15 are cleaved as a signal peptide; that stretch reads MNSVLCSRAAGAVRA. Residues 16-80 are Mitochondrial matrix-facing; sequence LRLVGWASRS…GKPQQRPWWK (65 aa). Residues 26–58 form a disordered region; that stretch reads LHPPPRGRSPAQPADREEEDDDPNLPIQFSGSK. The helical transmembrane segment at 81-97 threads the bilayer; that stretch reads VLPLTLTLVALVVWCYQ. The Mitochondrial intermembrane segment spans residues 98–136; sequence REESGMDLWLRQVLEEEDEEEPEGPPEELEAPALYGART. A compositionally biased stretch (acidic residues) spans 112–127; sequence EEEDEEEPEGPPEELE. The interval 112 to 136 is disordered; sequence EEEDEEEPEGPPEELEAPALYGART.

It belongs to the UQCC4 family. Forms a complex, named COMB/coordinator of mitochondrial CYTB biogenesis, composed of UQCC1, UQCC2, UQCC4, UQCC5 and UQCC6; stabilizes nascent cytochrome b/MT-CYB and promotes its membrane insertion. Forms a complex, named COMA, composed of UQCC1, UQCC2 and UQCC4; activates MT-CYB translation. Forms a complex, named COMC, composed of UQCC1, UQCC2; UQCC3 and UQCC4; mediates MT-CYB hemylation and association with the first nuclear-encoded complex III subunit UQCRQ. Complexes COMA and COMB are bound to the mitochondrion inner membrane by UQCC4.

Its subcellular location is the mitochondrion inner membrane. Required for the assembly and stability of the mitochondrial ubiquinol-cytochrome c reductase complex (complex III (CIII) or cytochrome b-c1 complex), a multisubunit transmembrane complex that is part of the mitochondrial electron transport chain (ETC) which drives oxidative phosphorylation. The sequence is that of Ubiquinol-cytochrome c reductase complex assembly factor 4 (Uqcc4) from Mus musculus (Mouse).